The sequence spans 474 residues: PRAME family member 8 (474 aa).

The LRR 1; degenerate repeat unit spans residues 97 to 122; the sequence is QSKLQVLDLRNVDENFCDIFSGATAS. An LRR 2; degenerate repeat occupies 177–201; sequence HVCCKELQVFGMPIHSIIEVLNMVE. The LRR 3; degenerate repeat unit spans residues 202–228; it reads LDCIQEVEVCCPWELSTLVKFAPYLGQ. An LRR 4; degenerate repeat occupies 229–264; that stretch reads MRNLRKLVLFNIRASACIPPDNKGQFIARFTSQFLK. LRR repeat units lie at residues 265 to 290, 291 to 322, 323 to 341, 347 to 374, and 375 to 399; these read LDYF…LRCL, QASL…RQLK, ELDL…PLTG, VATL…VLSR, and CSQL…LLRH.

The protein belongs to the PRAME family.

The polypeptide is PRAME family member 8 (Homo sapiens (Human)).